The sequence spans 107 residues: UPF0145 protein CHY_0465 (107 aa).

Belongs to the UPF0145 family.

This chain is UPF0145 protein CHY_0465, found in Carboxydothermus hydrogenoformans (strain ATCC BAA-161 / DSM 6008 / Z-2901).